Consider the following 373-residue polypeptide: 3 beta-hydroxysteroid dehydrogenase/Delta 5--&gt;4-isomerase type 2 (373 aa).

Residue Y155 is the Proton acceptor of the active site. K159 lines the NAD(+) pocket. A helical membrane pass occupies residues 288–308 (VPLLYWLAFLLETVSFLLSPI).

It belongs to the 3-beta-HSD family. Liver and kidney.

It is found in the endoplasmic reticulum membrane. The protein localises to the mitochondrion membrane. The enzyme catalyses a 3beta-hydroxy-Delta(5)-steroid + NAD(+) = a 3-oxo-Delta(5)-steroid + NADH + H(+). It carries out the reaction a 3-oxo-Delta(5)-steroid = a 3-oxo-Delta(4)-steroid. It catalyses the reaction pregnenolone + NAD(+) = pregn-5-ene-3,20-dione + NADH + H(+). The catalysed reaction is pregn-5-ene-3,20-dione = progesterone. The enzyme catalyses 3beta-hydroxyandrost-5-en-17-one + NAD(+) = androst-5-ene-3,17-dione + NADH + H(+). It carries out the reaction androst-5-ene-3,17-dione = androst-4-ene-3,17-dione. The protein operates within lipid metabolism; steroid biosynthesis. 3-beta-HSD is a bifunctional enzyme, that catalyzes the oxidative conversion of Delta(5)-ene-3-beta-hydroxy steroid, and the oxidative conversion of ketosteroids. The 3-beta-HSD enzymatic system plays a crucial role in the biosynthesis of all classes of hormonal steroids. This is 3 beta-hydroxysteroid dehydrogenase/Delta 5--&gt;4-isomerase type 2 from Mus musculus (Mouse).